Here is a 31-residue protein sequence, read N- to C-terminus: U2-theraphotoxin-Hhn1a (31 aa).

Intrachain disulfides connect cysteine 2-cysteine 14, cysteine 7-cysteine 19, and cysteine 13-cysteine 26.

Expressed by the venom gland.

It localises to the secreted. Functionally, agglutinates erythrocytes. The polypeptide is U2-theraphotoxin-Hhn1a (Cyriopagopus hainanus (Chinese bird spider)).